The sequence spans 58 residues: Small ribosomal subunit protein bS21 (58 aa).

The disordered stretch occupies residues 39–58; sequence DKPSVKKRAKSKAAAKYRSR. Over residues 43–58 the composition is skewed to basic residues; the sequence is VKKRAKSKAAAKYRSR.

The protein belongs to the bacterial ribosomal protein bS21 family.

This chain is Small ribosomal subunit protein bS21 (rpsU), found in Chlamydia pneumoniae (Chlamydophila pneumoniae).